A 333-amino-acid polypeptide reads, in one-letter code: Gap junction alpha-4 protein (333 aa).

The Cytoplasmic portion of the chain corresponds to 1–20 (MGDWGFLEKLLDQVQEHSTV). A helical membrane pass occupies residues 21 to 40 (VGKIWLTVLFIFRILILGLA). Residues 41–76 (GESVWGDEQSDFECNTAQPGCTNVCYDQAFPISHIR) are Extracellular-facing. Residues 77–99 (YWVLQFLFVSTPTLIYLGHVIYL) traverse the membrane as a helical segment. The Cytoplasmic portion of the chain corresponds to 100–148 (SRREERLRQKEGELRALPSKDPHVERALAAIEHQMAKISVAEDGRLRIR). A helical transmembrane segment spans residues 149 to 171 (GALMGTYVISVLCKSVLEAGFLY). Over 172 to 208 (GQWRLYGWTMEPVFVCQRAPCPHVVDCYVSRPTEKTI) the chain is Extracellular. A helical transmembrane segment spans residues 209 to 231 (FIIFMLVVGVISLVLNLLELVHL). At 232–333 (LCRCVSREIK…NSSASKKQYV (102 aa)) the chain is on the cytoplasmic side. The disordered stretch occupies residues 292 to 333 (ANLTTEERLTSTRPPPFVNAAPQGGQKSSSRPNSSASKKQYV). Over residues 318–333 (KSSSRPNSSASKKQYV) the composition is skewed to low complexity.

It belongs to the connexin family. Alpha-type (group II) subfamily. A connexon is composed of a hexamer of connexins. In terms of tissue distribution, highly expressed in lung.

The protein resides in the cell membrane. Its subcellular location is the cell junction. The protein localises to the gap junction. In terms of biological role, one gap junction consists of a cluster of closely packed pairs of transmembrane channels, the connexons, through which materials of low MW diffuse from one cell to a neighboring cell. This chain is Gap junction alpha-4 protein (Gja4), found in Rattus norvegicus (Rat).